A 292-amino-acid chain; its full sequence is Ribosomal protein L11 methyltransferase (292 aa).

S-adenosyl-L-methionine-binding residues include threonine 144, glycine 165, aspartate 187, and asparagine 229.

This sequence belongs to the methyltransferase superfamily. PrmA family.

It localises to the cytoplasm. The catalysed reaction is L-lysyl-[protein] + 3 S-adenosyl-L-methionine = N(6),N(6),N(6)-trimethyl-L-lysyl-[protein] + 3 S-adenosyl-L-homocysteine + 3 H(+). Its function is as follows. Methylates ribosomal protein L11. This Saccharophagus degradans (strain 2-40 / ATCC 43961 / DSM 17024) protein is Ribosomal protein L11 methyltransferase.